Consider the following 305-residue polypeptide: Mat- sexual cell fertilization-promoting factor (305 aa).

Residues proline 38 to arginine 93 constitute a DNA-binding region (alpha box).

Belongs to the MATALPHA1 family.

Its subcellular location is the nucleus. Functionally, controls fertilization, probably by determining the mating type. May be involved in the post-fertilization steps of the sexual cycle besides mat+. It is required for the developmental events that occur in the female organ after fertilization. This chain is Mat- sexual cell fertilization-promoting factor (FMR1), found in Podospora anserina (Pleurage anserina).